A 343-amino-acid chain; its full sequence is Phospholipid phosphatase-related protein type 2 (343 aa).

Transmembrane regions (helical) follow at residues 12–32 (FSII…VVLL), 72–92 (ALIY…GELA), and 129–149 (FLGV…AGQV). The N-linked (GlcNAc...) asparagine glycan is linked to Asn165. The next 3 membrane-spanning stretches (helical) occupy residues 210–230 (AALC…VFRV), 239–259 (SLCL…VAEY), and 266–286 (VLAG…CVVH). Positions 291–343 (RPHSGRRLSPWEDLSQAPTMDSPLEKNPRPAGRIRHRHGSPHPSRRTVPAVAT) are disordered. Residues Ser299 and Ser312 each carry the phosphoserine modification. Positions 322-335 (GRIRHRHGSPHPSR) are enriched in basic residues.

The protein belongs to the PA-phosphatase related phosphoesterase family.

The protein resides in the membrane. The sequence is that of Phospholipid phosphatase-related protein type 2 from Mus musculus (Mouse).